Consider the following 71-residue polypeptide: BBSome-interacting protein 1 (71 aa).

This sequence belongs to the BBIP10 family.

It is found in the cell projection. It localises to the cilium. Its subcellular location is the cytoplasm. In terms of biological role, required for primary cilia assembly. The sequence is that of BBSome-interacting protein 1 (bbip1) from Nematostella vectensis (Starlet sea anemone).